The sequence spans 211 residues: Large ribosomal subunit protein uL3 (211 aa).

The protein belongs to the universal ribosomal protein uL3 family. In terms of assembly, part of the 50S ribosomal subunit. Forms a cluster with proteins L14 and L19.

One of the primary rRNA binding proteins, it binds directly near the 3'-end of the 23S rRNA, where it nucleates assembly of the 50S subunit. The polypeptide is Large ribosomal subunit protein uL3 (Trichlorobacter lovleyi (strain ATCC BAA-1151 / DSM 17278 / SZ) (Geobacter lovleyi)).